A 426-amino-acid chain; its full sequence is Protein EARLY STARVATION 1, chloroplastic (426 aa).

The transit peptide at 1-58 (MSEMAASSAISLLDIKLRRFGVGASNHELRLTKWFKGDQAGAPTRRFTCFADMLAPIR) directs the protein to the chloroplast. Disordered regions lie at residues 106–127 (CTPR…TGIA) and 396–426 (QPRE…DQPQ). Over residues 118-127 (TPPKRDTGIA) the composition is skewed to basic and acidic residues. A compositionally biased stretch (pro residues) spans 412–426 (PSPPPEPDLPPDQPQ).

The protein belongs to the ESV1 family.

Its subcellular location is the plastid. The protein localises to the chloroplast stroma. It localises to the plastid stroma. In terms of biological role, binds preferentially to highly ordered alpha-glucans, such as starch and crystalline maltodextrins. Involved in the organization of the starch granule matrix, thus influencing starch turnover by modulating the accessibility of starch polymers to modifying and degrading enzymes involved in phosphorylation, hydrolyzes and synthesis, including starch synthases (SSI and SSIII), starch phosphorylases (PHS1), isoamylase, beta-amylase, glucan water dikinase (GWD) and phosphoglucan water dikinase (PWD). Prevents GWD- and PWD-mediated starch phosphorylation, and subsequent degradation. Required for the control of starch degradation in leaves and starch distribution in nonphotosynthetic parts (e.g. cells immediately adjacent to veins, columella cells of root caps, stems, flowers and siliques) by limiting the hasty depletion of starch reserves during the night. Promotes gravitropic responses, negative in shoots but positive in roots, by maintaining starch granules (statoliths) accumulation in hypocotyls and roots columella, especially in dark conditions and in the endodermis, where starch is formed from transported glucose-6-phosphates. The sequence is that of Protein EARLY STARVATION 1, chloroplastic from Arabidopsis thaliana (Mouse-ear cress).